A 1119-amino-acid polypeptide reads, in one-letter code: DNA-directed RNA polymerase subunit beta (1119 aa).

Belongs to the RNA polymerase beta chain family. In terms of assembly, the RNAP catalytic core consists of 2 alpha, 1 beta, 1 beta' and 1 omega subunit. When a sigma factor is associated with the core the holoenzyme is formed, which can initiate transcription.

The enzyme catalyses RNA(n) + a ribonucleoside 5'-triphosphate = RNA(n+1) + diphosphate. In terms of biological role, DNA-dependent RNA polymerase catalyzes the transcription of DNA into RNA using the four ribonucleoside triphosphates as substrates. The protein is DNA-directed RNA polymerase subunit beta of Thermus aquaticus.